Reading from the N-terminus, the 407-residue chain is F-box protein SKIP23 (407 aa).

In terms of domain architecture, F-box spans 2–50; sequence VDWSTLPKDLLDLISKSLESSFDLIQFRSVCSSWRSAAEPKSPLPTHHL.

As to quaternary structure, part of a SCF (ASK-cullin-F-box) protein ligase complex. Interacts with SKP1A/ASK1.

It is found in the nucleus. It functions in the pathway protein modification; protein ubiquitination. Functionally, component of SCF(ASK-cullin-F-box) E3 ubiquitin ligase complexes, which may mediate the ubiquitination and subsequent proteasomal degradation of target proteins. The chain is F-box protein SKIP23 (SKIP23) from Arabidopsis thaliana (Mouse-ear cress).